A 274-amino-acid chain; its full sequence is Tryptophan synthase alpha chain (274 aa).

Residues Glu49 and Asp60 each act as proton acceptor in the active site.

This sequence belongs to the TrpA family. Tetramer of two alpha and two beta chains.

It carries out the reaction (1S,2R)-1-C-(indol-3-yl)glycerol 3-phosphate + L-serine = D-glyceraldehyde 3-phosphate + L-tryptophan + H2O. It participates in amino-acid biosynthesis; L-tryptophan biosynthesis; L-tryptophan from chorismate: step 5/5. Its function is as follows. The alpha subunit is responsible for the aldol cleavage of indoleglycerol phosphate to indole and glyceraldehyde 3-phosphate. The sequence is that of Tryptophan synthase alpha chain from Zymomonas mobilis subsp. mobilis (strain ATCC 31821 / ZM4 / CP4).